The primary structure comprises 211 residues: FMN-dependent NADH:quinone oxidoreductase 2 (211 aa).

Residues Ser10 and 17-19 (SRS) contribute to the FMN site.

Belongs to the azoreductase type 1 family. As to quaternary structure, homodimer. FMN serves as cofactor.

The enzyme catalyses 2 a quinone + NADH + H(+) = 2 a 1,4-benzosemiquinone + NAD(+). It catalyses the reaction N,N-dimethyl-1,4-phenylenediamine + anthranilate + 2 NAD(+) = 2-(4-dimethylaminophenyl)diazenylbenzoate + 2 NADH + 2 H(+). In terms of biological role, quinone reductase that provides resistance to thiol-specific stress caused by electrophilic quinones. Also exhibits azoreductase activity. Catalyzes the reductive cleavage of the azo bond in aromatic azo compounds to the corresponding amines. The polypeptide is FMN-dependent NADH:quinone oxidoreductase 2 (Listeria monocytogenes serotype 4b (strain F2365)).